The sequence spans 198 residues: Glycerol-3-phosphate acyltransferase (198 aa).

The next 5 helical transmembrane spans lie at 5–25 (LILL…LWIG), 56–76 (SIVT…PFFF), 84–104 (FWLL…FAGF), 114–134 (AGVI…IFLL), and 158–178 (LFMG…FVVW).

This sequence belongs to the PlsY family. In terms of assembly, probably interacts with PlsX.

The protein localises to the cell membrane. The catalysed reaction is an acyl phosphate + sn-glycerol 3-phosphate = a 1-acyl-sn-glycero-3-phosphate + phosphate. It functions in the pathway lipid metabolism; phospholipid metabolism. Its function is as follows. Catalyzes the transfer of an acyl group from acyl-phosphate (acyl-PO(4)) to glycerol-3-phosphate (G3P) to form lysophosphatidic acid (LPA). This enzyme utilizes acyl-phosphate as fatty acyl donor, but not acyl-CoA or acyl-ACP. The chain is Glycerol-3-phosphate acyltransferase from Listeria welshimeri serovar 6b (strain ATCC 35897 / DSM 20650 / CCUG 15529 / CIP 8149 / NCTC 11857 / SLCC 5334 / V8).